A 491-amino-acid chain; its full sequence is Glutamate--tRNA ligase (491 aa).

Residues 14–24 (PSPTGSPHVGL) carry the 'HIGH' region motif. Zn(2+) is bound by residues cysteine 111, cysteine 113, cysteine 136, and aspartate 138. The short motif at 257 to 261 (KLSKR) is the 'KMSKS' region element. Residue lysine 260 coordinates ATP.

It belongs to the class-I aminoacyl-tRNA synthetase family. Glutamate--tRNA ligase type 1 subfamily. As to quaternary structure, monomer. Zn(2+) is required as a cofactor.

The protein resides in the cytoplasm. It catalyses the reaction tRNA(Glu) + L-glutamate + ATP = L-glutamyl-tRNA(Glu) + AMP + diphosphate. Catalyzes the attachment of glutamate to tRNA(Glu) in a two-step reaction: glutamate is first activated by ATP to form Glu-AMP and then transferred to the acceptor end of tRNA(Glu). In Nocardioides sp. (strain ATCC BAA-499 / JS614), this protein is Glutamate--tRNA ligase.